The primary structure comprises 87 residues: Beta-toxin Cn4 (87 aa).

Residues 1–19 (MNSLLMITACLALVGTVWA) form the signal peptide. Residues 20 to 85 (KEGYLVNSYT…VWPLKNKTCN (66 aa)) form the LCN-type CS-alpha/beta domain. 4 disulfide bridges follow: Cys-31–Cys-84, Cys-35–Cys-60, Cys-44–Cys-65, and Cys-48–Cys-67. Residue Asn-85 is modified to Asparagine amide.

Belongs to the long (4 C-C) scorpion toxin superfamily. Sodium channel inhibitor family. Beta subfamily. In terms of tissue distribution, expressed by the venom gland.

It localises to the secreted. Its function is as follows. Beta toxins bind voltage-independently at site-4 of sodium channels (Nav) and shift the voltage of activation toward more negative potentials thereby affecting sodium channel activation and promoting spontaneous and repetitive firing. This toxin affects the activation mechanism of sodium channels of squid axon. It also competes with Cn2 in rat brain synaptosomes. Is lethal to mice. In Centruroides noxius (Mexican scorpion), this protein is Beta-toxin Cn4.